A 911-amino-acid polypeptide reads, in one-letter code: Probable dipeptidyl-aminopeptidase B (911 aa).

The interval 1–39 (MPRPRAAKEEETELLAQHQESPRPSSDGSEASASSISTT) is disordered. The Cytoplasmic segment spans residues 1–97 (MPRPRAAKEE…TPVDKKARRT (97 aa)). Over residues 25 to 39 (SSDGSEASASSISTT) the composition is skewed to low complexity. A helical; Signal-anchor for type II membrane protein transmembrane segment spans residues 98 to 118 (LWIVGTICAVGWALALVSFLM). Residues 119-911 (NGNYKHSSTR…AQADARSLGR (793 aa)) lie on the Vacuolar side of the membrane. N-linked (GlcNAc...) asparagine glycans are attached at residues Asn-268 and Asn-564. Catalysis depends on Ser-755, which acts as the Charge relay system. A glycan (N-linked (GlcNAc...) asparagine) is linked at Asn-809. Active-site charge relay system residues include Asp-832 and His-865.

This sequence belongs to the peptidase S9B family.

The protein localises to the vacuole membrane. The catalysed reaction is Release of an N-terminal dipeptide, Xaa-Yaa-|-Zaa-, from a polypeptide, preferentially when Yaa is Pro, provided Zaa is neither Pro nor hydroxyproline.. Its function is as follows. Type IV dipeptidyl-peptidase which removes N-terminal dipeptides sequentially from polypeptides having unsubstituted N-termini provided that the penultimate residue is proline. The protein is Probable dipeptidyl-aminopeptidase B (DAPB) of Phaeosphaeria nodorum (strain SN15 / ATCC MYA-4574 / FGSC 10173) (Glume blotch fungus).